Consider the following 202-residue polypeptide: Mevalonate-3-phosphate 5-kinase (202 aa).

The enzyme catalyses (R)-3-phosphomevalonate + ATP = (R)-3,5-bisphosphomevalonate + ADP + H(+). The protein operates within isoprenoid biosynthesis; isopentenyl diphosphate biosynthesis via mevalonate pathway. Functionally, phosphorylates mevalonate 3-phosphate to form mevalonate 3,5-bisphosphate. Functions in an alternative mevalonate pathway, only present in extreme acidophiles of the Thermoplasmatales order, which passes through mevalonate 3-phosphate rather than mevalonate 5-phosphate. The chain is Mevalonate-3-phosphate 5-kinase from Thermoplasma acidophilum (strain ATCC 25905 / DSM 1728 / JCM 9062 / NBRC 15155 / AMRC-C165).